The sequence spans 542 residues: Putative sodium-dependent excitatory amino acid transporter glt-6 (542 aa).

The Cytoplasmic portion of the chain corresponds to 1-15; that stretch reads MKSKRRDDIVQFCRE. A run of 3 helical transmembrane segments spans residues 16–36, 55–75, and 93–113; these read NTLL…GFGL, IFMQ…LISA, and LYYL…VTVI. Topologically, residues 114–191 are extracellular; it reads HPGDPSIKGT…IVKRSIGMTK (78 aa). N-linked (GlcNAc...) asparagine glycosylation occurs at Asn-175. Helical transmembrane passes span 192-212, 234-254, 265-285, 303-323, and 386-406; these read GMNI…ISQL, VVTL…GNLL, VLAL…IITV, GMIQ…TLPM, and TIAS…LLIL. A compositionally biased stretch (low complexity) spans 505-517; it reads RIGSRIGSRRPSS. A disordered region spans residues 505 to 542; it reads RIGSRIGSRRPSSTNLHLSWRNNNIEPPYTPLPNDENV. Residues 518–529 are compositionally biased toward polar residues; that stretch reads TNLHLSWRNNNI.

This sequence belongs to the dicarboxylate/amino acid:cation symporter (DAACS) (TC 2.A.23) family.

It localises to the membrane. The protein is Putative sodium-dependent excitatory amino acid transporter glt-6 (glt-6) of Caenorhabditis elegans.